The primary structure comprises 237 residues: U2 small nuclear ribonucleoprotein A' (237 aa).

LRR repeat units lie at residues 53-74, 75-95, and 97-118; these read RTNIVDFTNNELEELPPLGHND, TVHTLLLSRNRLGRLDASRLP, and YLVNLNLAMNRFEKFEQLQGLR. One can recognise an LRRCT domain in the interval 132 to 170; that stretch reads NVICHKEQYRETVIALCPQLAVLDGERVRQAERQAAPQN. The interval 161-182 is disordered; sequence QAERQAAPQNEKTDTPTEGPQP.

The protein belongs to the U2 small nuclear ribonucleoprotein A family. In terms of assembly, associated with the spliceosome.

It localises to the nucleus. Functionally, involved in pre-mRNA splicing. This is U2 small nuclear ribonucleoprotein A' (LEA1) from Eremothecium gossypii (strain ATCC 10895 / CBS 109.51 / FGSC 9923 / NRRL Y-1056) (Yeast).